A 469-amino-acid polypeptide reads, in one-letter code: Ufm1-specific protease 2 (469 aa).

Residue Met-1 is modified to N-acetylmethionine. Catalysis depends on residues Cys-302, Asp-426, and His-428.

The protein belongs to the peptidase C78 family.

The protein resides in the endoplasmic reticulum. It is found in the cytoplasm. The protein localises to the nucleus. In terms of biological role, thiol-dependent isopeptidase that specifically cleaves UFM1, a ubiquitin-like modifier protein, from conjugated proteins, such as CD274/PD-L1, CYB5R3, DDRGK1, MRE11, RPL26/uL24, TRIP4 and RPL26/uL24. While it is also able to mediate the processing of UFM1 precursors, a prerequisite for conjugation reactions, UFSP2 mainly acts as a protein deUFMylase that mediates deconjugation of UFM1 from target proteins. Mediates deUFMylation of RPL26/uL24, a critical step to release the UFM1 ribosome E3 ligase (UREL) complex during the recycling of 60S ribosome subunits from the endoplasmic reticulum. Catalyzes deUFMylation of TRIP4, regulating intracellular nuclear receptors transactivation and thereby regulate cell proliferation and differentiation. The chain is Ufm1-specific protease 2 from Pongo abelii (Sumatran orangutan).